An 863-amino-acid chain; its full sequence is ATP-dependent helicase Lhr-Core protein 2 (863 aa).

8 residues coordinate ATP: F30, Q37, K60, T61, D179, E180, R377, and H380. Positions 41 to 234 (VIEIHKGENV…FVFGFNDDGT (194 aa)) constitute a Helicase ATP-binding domain. A DEAH box motif is present at residues 179–182 (DEVH). The region spanning 275–424 (RLDELIEQHR…RIKIPQNPLD (150 aa)) is the Helicase C-terminal domain. Residues 418 to 512 (IPQNPLDVLV…AIYYMNTGTI (95 aa)) form a WH domain region. The segment at 513–863 (PDEAKIEVYT…KIMAMIGELE (351 aa)) is domain 4.

The protein belongs to the Lhr helicase family. Lhr-Core subfamily. As to quaternary structure, monomer.

The catalysed reaction is ATP + H2O = ADP + phosphate + H(+). Its activity is regulated as follows. Unwinding of dsRNA duplexes is inhibited by AMP-PMP and ATP-gamma-S. A DNA:RNA helicase with a significant strand annealing activity, probably involved in DNA repair and RNA transactions. In vitro has a slow helicase activity with a preference for 3'-overhang duplexes; displaces RNA from 3'-overhang DNA:RNA or RNA:RNA duplexes. 3'-tailed double-stranded (ds)DNA is not unwound. The slow helicase activity on RNA duplexes is ATP-independent. Has strand annealing properties in the absence of ATP; forms 3'-overhang DNA:RNA, 3'-overhang dsRNA and 3'-overhang dsDNA duplexes but not 5'-overhang duplexes. A nucleic acid-dependent ATPase; single-stranded (ss)DNA and RNA are equally stimulatory. Binds ssDNA, RNA, dsDNA and dsRNA duplexes. In Thermococcus barophilus (strain DSM 11836 / MP), this protein is ATP-dependent helicase Lhr-Core protein 2.